Consider the following 640-residue polypeptide: 1-deoxy-D-xylulose-5-phosphate synthase (640 aa).

Residues histidine 75 and 117 to 119 (GHA) each bind thiamine diphosphate. Aspartate 146 is a binding site for Mg(2+). Residues 147 to 148 (AA), asparagine 175, and glutamate 370 contribute to the thiamine diphosphate site. Asparagine 175 provides a ligand contact to Mg(2+).

This sequence belongs to the transketolase family. DXPS subfamily. In terms of assembly, homodimer. Requires Mg(2+) as cofactor. Thiamine diphosphate is required as a cofactor.

The enzyme catalyses D-glyceraldehyde 3-phosphate + pyruvate + H(+) = 1-deoxy-D-xylulose 5-phosphate + CO2. It participates in metabolic intermediate biosynthesis; 1-deoxy-D-xylulose 5-phosphate biosynthesis; 1-deoxy-D-xylulose 5-phosphate from D-glyceraldehyde 3-phosphate and pyruvate: step 1/1. Its function is as follows. Catalyzes the acyloin condensation reaction between C atoms 2 and 3 of pyruvate and glyceraldehyde 3-phosphate to yield 1-deoxy-D-xylulose-5-phosphate (DXP). In Chlamydia trachomatis serovar D (strain ATCC VR-885 / DSM 19411 / UW-3/Cx), this protein is 1-deoxy-D-xylulose-5-phosphate synthase.